The chain runs to 242 residues: Ribonuclease PH (242 aa).

Phosphate-binding positions include Arg87 and 125-127; that span reads STR.

Belongs to the RNase PH family. As to quaternary structure, homohexameric ring arranged as a trimer of dimers.

It carries out the reaction tRNA(n+1) + phosphate = tRNA(n) + a ribonucleoside 5'-diphosphate. Phosphorolytic 3'-5' exoribonuclease that plays an important role in tRNA 3'-end maturation. Removes nucleotide residues following the 3'-CCA terminus of tRNAs; can also add nucleotides to the ends of RNA molecules by using nucleoside diphosphates as substrates, but this may not be physiologically important. Probably plays a role in initiation of 16S rRNA degradation (leading to ribosome degradation) during starvation. The protein is Ribonuclease PH of Synechococcus sp. (strain JA-3-3Ab) (Cyanobacteria bacterium Yellowstone A-Prime).